The primary structure comprises 228 residues: Thymidylate kinase (228 aa).

20-27 (GGEGSGKS) is a binding site for ATP.

It belongs to the thymidylate kinase family.

The enzyme catalyses dTMP + ATP = dTDP + ADP. Phosphorylation of dTMP to form dTDP in both de novo and salvage pathways of dTTP synthesis. The protein is Thymidylate kinase of Afipia carboxidovorans (strain ATCC 49405 / DSM 1227 / KCTC 32145 / OM5) (Oligotropha carboxidovorans).